The following is a 47-amino-acid chain: MSLDAASHQPAARRLLDSALVRRVLACMIIVIMIAISIWILTYVLFL.

The chain crosses the membrane as a helical span at residues 27-47 (CMIIVIMIAISIWILTYVLFL).

Its subcellular location is the host membrane. The chain is Protein RL9A (RL9A) from Human cytomegalovirus (strain Merlin) (HHV-5).